The chain runs to 112 residues: Cytochrome c2 (112 aa).

The heme c site is built by C14, C17, H18, and M91.

Belongs to the cytochrome c family. In terms of processing, binds 1 heme c group covalently per subunit.

In terms of biological role, cytochrome c2 is found mainly in purple, non-sulfur, photosynthetic bacteria where it functions as the electron donor to the oxidized bacteriochlorophyll in the photophosphorylation pathway. However, it may also have a role in the respiratory chain and is found in some non-photosynthetic bacteria. In Rhodospirillum rubrum, this protein is Cytochrome c2 (cycA).